We begin with the raw amino-acid sequence, 511 residues long: Maturase K (511 aa).

This sequence belongs to the intron maturase 2 family. MatK subfamily.

The protein resides in the plastid. It is found in the chloroplast. Usually encoded in the trnK tRNA gene intron. Probably assists in splicing its own and other chloroplast group II introns. This Avena sativa (Oat) protein is Maturase K.